The chain runs to 138 residues: UPF0201 protein PH1010 (138 aa).

The protein belongs to the UPF0201 family.

In Pyrococcus horikoshii (strain ATCC 700860 / DSM 12428 / JCM 9974 / NBRC 100139 / OT-3), this protein is UPF0201 protein PH1010.